Consider the following 207-residue polypeptide: Large ribosomal subunit protein uL4 (207 aa).

The segment at 45 to 78 (RQGTHAVKNRSAVSGGGRKPWRQKGTGRARQGSI) is disordered.

The protein belongs to the universal ribosomal protein uL4 family. As to quaternary structure, part of the 50S ribosomal subunit.

Functionally, one of the primary rRNA binding proteins, this protein initially binds near the 5'-end of the 23S rRNA. It is important during the early stages of 50S assembly. It makes multiple contacts with different domains of the 23S rRNA in the assembled 50S subunit and ribosome. Forms part of the polypeptide exit tunnel. The chain is Large ribosomal subunit protein uL4 from Lacticaseibacillus paracasei (strain ATCC 334 / BCRC 17002 / CCUG 31169 / CIP 107868 / KCTC 3260 / NRRL B-441) (Lactobacillus paracasei).